A 708-amino-acid polypeptide reads, in one-letter code: Capsid scaffolding protein (708 aa).

Catalysis depends on charge relay system residues histidine 63, serine 132, and histidine 157. Disordered stretches follow at residues 269-339 (ASAE…MSHP), 455-565 (HPSY…QQQR), and 593-619 (ALPS…SGGG). The segment covering 284–293 (PAAGARVPSS) has biased composition (low complexity). Residues 294–311 (SPSPPVEPPSPVQPPALP) are compositionally biased toward pro residues. Low complexity predominate over residues 326–339 (SPSEPAEAASMSHP). The tract at residues 333–352 (AASMSHPLSAAVPAATAPPG) is interaction with pAP. Positions 498 to 513 (KQHRHGGSGGHNKRRK) are enriched in basic residues. 2 short sequence motifs (nuclear localization signal) span residues 510-515 (KRRKET) and 537-543 (RARKRLK). A compositionally biased stretch (low complexity) spans 593–611 (ALPSAASSSPTTTTVCTPT). The segment at 688-708 (PPKDMVDLNRRIFVAALNKLE) is interaction with major capsid protein.

This sequence belongs to the herpesviridae capsid scaffolding protein family. Homomultimer. Interacts with major capsid protein. In terms of assembly, exists in a monomer-dimer equilibrium with the dimer being the active species. In terms of processing, capsid scaffolding protein is cleaved by assemblin after formation of the spherical procapsid. As a result, the capsid obtains its mature, icosahedral shape. Cleavages occur at two or more sites: release (R-site) and maturation (M-site).

It is found in the host cytoplasm. The protein resides in the host nucleus. It catalyses the reaction Cleaves -Ala-|-Ser- and -Ala-|-Ala- bonds in the scaffold protein.. Functionally, acts as a scaffold protein by binding major capsid protein in the cytoplasm, inducing the nuclear localization of both proteins. Multimerizes in the nucleus such as major capsid protein forms the icosahedral T=16 capsid. Autocatalytic cleavage releases the assembly protein, and subsequently abolishes interaction with major capsid protein. Cleavages products are evicted from the capsid before or during DNA packaging. Protease that plays an essential role in virion assembly within the nucleus. Catalyzes the cleavage of the assembly protein after formation of the spherical procapsid. By that cleavage, the capsid matures and gains its icosahedral shape. The cleavage sites seem to include -Ala-Ser-, -Ala-Ala-, as well as Ala-Thr bonds. Assemblin and cleavages products are evicted from the capsid before or during DNA packaging. In terms of biological role, plays a major role in capsid assembly. Acts as a scaffold protein by binding major capsid protein. Multimerizes in the nucleus such as major capsid protein forms the icosahedral T=16 capsid. Cleaved by assemblin after capsid completion. The cleavages products are evicted from the capsid before or during DNA packaging. The polypeptide is Capsid scaffolding protein (UL80) (Homo sapiens (Human)).